Consider the following 541-residue polypeptide: Nucleoporin NUP57 (541 aa).

Over residues 1–13 (MFGFSGSNNGFGN) the composition is skewed to low complexity. The disordered stretch occupies residues 1–261 (MFGFSGSNNG…STGSNLQQQQ (261 aa)). FG repeat units lie at residues 2–3 (FG) and 11–12 (FG). The span at 19–36 (TGFSFGQNNNNTNTQPSA) shows a compositional bias: polar residues. 2 FXFG repeats span residues 21 to 24 (FSFG) and 39 to 42 (FGFG). 2 FG repeats span residues 56–57 (FG) and 65–66 (FG). Over residues 58–72 (ANQATNTFGSNQQSS) the composition is skewed to polar residues. Residues 76-79 (GLFG) form a GLFG 1 repeat. A compositionally biased stretch (low complexity) spans 83 to 102 (ALGSLGSSSTTASGTTATGT). GLFG repeat units lie at residues 103–106 (GLFG), 120–123 (GLFG), 132–135 (GLFG), and 147–150 (GLFG). The segment covering 105-116 (FGQQTAQPQQST) has biased composition (polar residues). Over residues 125-146 (KPTTTTGGLFGNSAQNNSTTSG) the composition is skewed to polar residues. Positions 153-172 (VGSTGSLMGGNSTQNTSNMN) are enriched in polar residues. 4 GLFG repeats span residues 175–178 (GLFG), 190–193 (GLFG), 204–207 (GLFG), and 220–223 (GLFG). Residues 228 to 257 (PQTNTAPGLGNTVSTQPSFAWSKPSTGSNL) show a composition bias toward polar residues. Residues 398–425 (ILKAQSRNVEIEKRILKLGTQLATLKNR) are a coiled coil.

The protein belongs to the nucleoporin GLFG family. In terms of assembly, component of the nuclear pore complex (NPC). NPC constitutes the exclusive means of nucleocytoplasmic transport. NPCs allow the passive diffusion of ions and small molecules and the active, nuclear transport receptor-mediated bidirectional transport of macromolecules such as proteins, RNAs, ribonucleoparticles (RNPs), and ribosomal subunits across the nuclear envelope. Due to its 8-fold rotational symmetry, all subunits are present with 8 copies or multiples thereof. NUP57 is part of the NUP57 subcomplex (NIC96, NSP1, NUP49, NUP57) interacting with NUP49 and NSP1. Interacts through its FG repeats with karyopherins.

Its subcellular location is the nucleus. The protein resides in the nuclear pore complex. It is found in the nucleus membrane. Functions as a component of the nuclear pore complex (NPC). NPC components, collectively referred to as nucleoporins (NUPs), can play the role of both NPC structural components and of docking or interaction partners for transiently associated nuclear transport factors. Active directional transport is assured by both, a Phe-Gly (FG) repeat affinity gradient for these transport factors across the NPC and a transport cofactor concentration gradient across the nuclear envelope (GSP1 and GSP2 GTPases associated predominantly with GTP in the nucleus, with GDP in the cytoplasm). NUP57 plays an important role in several nuclear transport pathways including poly(A)+ RNA, tRNA, and pre-ribosome transport. The sequence is that of Nucleoporin NUP57 (NUP57) from Saccharomyces cerevisiae (strain ATCC 204508 / S288c) (Baker's yeast).